A 239-amino-acid chain; its full sequence is Uridylate kinase (239 aa).

12–15 (KLSG) is a binding site for ATP. Gly-53 contacts UMP. The ATP site is built by Gly-54 and Arg-58. UMP is bound by residues Asp-73 and 135-142 (TGSPCFTT). Thr-162, Tyr-168, and Asp-171 together coordinate ATP.

Belongs to the UMP kinase family. In terms of assembly, homohexamer.

Its subcellular location is the cytoplasm. The catalysed reaction is UMP + ATP = UDP + ADP. It functions in the pathway pyrimidine metabolism; CTP biosynthesis via de novo pathway; UDP from UMP (UMPK route): step 1/1. With respect to regulation, inhibited by UTP. Functionally, catalyzes the reversible phosphorylation of UMP to UDP. In Ruthia magnifica subsp. Calyptogena magnifica, this protein is Uridylate kinase.